We begin with the raw amino-acid sequence, 304 residues long: ATP phosphoribosyltransferase (304 aa).

Belongs to the ATP phosphoribosyltransferase family. Long subfamily. The cofactor is Mg(2+).

It localises to the cytoplasm. The catalysed reaction is 1-(5-phospho-beta-D-ribosyl)-ATP + diphosphate = 5-phospho-alpha-D-ribose 1-diphosphate + ATP. The protein operates within amino-acid biosynthesis; L-histidine biosynthesis; L-histidine from 5-phospho-alpha-D-ribose 1-diphosphate: step 1/9. Its activity is regulated as follows. Feedback inhibited by histidine. Catalyzes the condensation of ATP and 5-phosphoribose 1-diphosphate to form N'-(5'-phosphoribosyl)-ATP (PR-ATP). Has a crucial role in the pathway because the rate of histidine biosynthesis seems to be controlled primarily by regulation of HisG enzymatic activity. This is ATP phosphoribosyltransferase from Xanthomonas oryzae pv. oryzae (strain MAFF 311018).